A 42-amino-acid polypeptide reads, in one-letter code: Photosystem I reaction center subunit IX (42 aa).

Residues 8 to 28 form a helical membrane-spanning segment; sequence YLSTIPVVGAIWLTFTAGFII.

This sequence belongs to the PsaJ family.

It localises to the plastid. Its subcellular location is the chloroplast thylakoid membrane. In terms of biological role, may help in the organization of the PsaE and PsaF subunits. The protein is Photosystem I reaction center subunit IX of Gracilaria tenuistipitata var. liui (Red alga).